The following is a 535-amino-acid chain: Unconventional prefoldin RPB5 interactor 1 (535 aa).

Position 1 is an N-acetylmethionine (methionine 1). 4 disordered regions span residues 1 to 23 (MEAPTVETPPDPSPPSAPAPALV), 223 to 330 (LLGE…VGDN), 352 to 383 (KNTTLKFSEKKEEAKRKRKNSTGSGHSAQELP), and 412 to 431 (SRSRENSVCSDTSESSAAEF). Positions 7 to 18 (ETPPDPSPPSAP) are enriched in pro residues. Polar residues-rich tracts occupy residues 253-265 (TNVNAMHQVTDSH) and 276-296 (EPFSGQVNSQLNCSVNGSSSY). Residues 299-320 (DDDDDDDDDDDDDNIDDDDGDN) are compositionally biased toward acidic residues. Serine 372 is modified (phosphoserine; by RPS6KB1). Residue threonine 373 is modified to Phosphothreonine. Positions 417–427 (NSVCSDTSESS) are enriched in polar residues. Serine 442 carries the phosphoserine modification.

It belongs to the RNA polymerase II subunit 5-mediating protein family. In terms of assembly, homodimer. Component of the PAQosome complex which is responsible for the biogenesis of several protein complexes and which consists of R2TP complex members RUVBL1, RUVBL2, RPAP3 and PIH1D1, URI complex members PFDN2, PFDN6, PDRG1, UXT and URI1 as well as ASDURF, POLR2E and DNAAF10/WDR92. Interacts with POLR2E/RPB5, RUVBL2 and RUVBL1. Interacts with PFDN2, PFDN4 and STAP1; the interactions are phosphorylation-dependent and occur in a growth-dependent manner in the mitochondrion. Interacts with UXT. Interacts with PPP1CC; the interaction is phosphorylation-dependent and occurs in a growth factor-dependent manner. Interacts (via the middle C-terminal region) with GTF2F1 and GTF2F2. Interacts with DMAP1. Interacts with TSC1 and TSC2. Interacts with PRPF8 and EFTUD2 in a ZNHIT2-dependent manner. Phosphorylated. Phosphorylation occurs essentially on serine residues. Phosphorylation occurs in response to androgen treatment in prostate cancer cells in a mTOR-dependent manner. Phosphorylated; hyperhosphorylated in mitochondria in a mTORC-dependent signaling pathway. Phosphorylated at Ser-372 by RPS6KB1 in a growth factor- and rapamycin-dependent manner. S6K1-mediated mitochondrial phosphorylation at Ser-372 disrupts the URI1-PPP1CC complex in the mitochondrion, relieves PPP1CC phosphatase inhibition activity and hence engages a negative feedback diminishing RPS6KB1 kinase activity, preventing sustained S6K1-dependent signaling. As to expression, ubiquitous. Expressed in ovarian cancers (at protein level). Expressed strongly in skeletal muscle. Expressed weakly in brain, heart, pancreas and in prostate epithelial cells.

The protein localises to the nucleus. It localises to the cytoplasm. It is found in the mitochondrion. The protein resides in the cell projection. Its subcellular location is the dendrite. Functionally, involved in gene transcription regulation. Acts as a transcriptional repressor in concert with the corepressor UXT to regulate androgen receptor (AR) transcription. May act as a tumor suppressor to repress AR-mediated gene transcription and to inhibit anchorage-independent growth in prostate cancer cells. Required for cell survival in ovarian cancer cells. Together with UXT, associates with chromatin to the NKX3-1 promoter region. Antagonizes transcriptional modulation via hepatitis B virus X protein. Plays a central role in maintaining S6K1 signaling and BAD phosphorylation under normal growth conditions thereby protecting cells from potential deleterious effects of sustained S6K1 signaling. The URI1-PPP1CC complex acts as a central component of a negative feedback mechanism that counteracts excessive S6K1 survival signaling to BAD in response to growth factors. Mediates inhibition of PPP1CC phosphatase activity in mitochondria. Coordinates the regulation of nutrient-sensitive gene expression availability in a mTOR-dependent manner. Seems to be a scaffolding protein able to assemble a prefoldin-like complex that contains PFDs and proteins with roles in transcription and ubiquitination. In Homo sapiens (Human), this protein is Unconventional prefoldin RPB5 interactor 1 (URI1).